Here is a 549-residue protein sequence, read N- to C-terminus: MAKTIEFDETARRKLLSGVNKLANAVKVTLGPKGRNVVIDKKFGSPTITKDGVTVAKEIELEDAIENMGAQMVKEVSTKTNDIAGDGTTTATILAQAIINEGLKNVTAGANPMALKHGIDKAVVVAVEEIKKHAIKINSKAEYANVATISANNDPEIGNLIAQAFDKVGKEGVITVDEAKSIETTLDIVEGMQFDRGYVSPYMVTDPEAMIATFNDPFILIYDKKIASMKDLLPVLEKIAQAGRPLVIIAEEVEGEALATIVVNTLRKTIQCVAVKAPGFGDRRKAMLEDIAILTGGQVISEDLGMKLENADVKMLGRAKKVVVDKENTTIIEGAGASKDIQGRVNQIKKQIEDTTSDYDREKLQERLAKLAGGVAVIHVGAATEVEMKEKKARVEDALSATRAAVEEGIVPGGGLTLLRAQDAVKALKLVGDEQTGANIILRALEEPIRMITSNAGLEGSVIVEQARARKGNEGFNALTMVWEDLIKAGVVDPAKVVRSALQNAASIGAMILTTEVTITDKPEPKDASGAGMGGMGGMGGMGGMGGMM.

ATP contacts are provided by residues 29–32, K50, 86–90, G414, 477–479, and D493; these read TLGP, DGTTT, and NAL.

The protein belongs to the chaperonin (HSP60) family. As to quaternary structure, forms a cylinder of 14 subunits composed of two heptameric rings stacked back-to-back. Interacts with the co-chaperonin GroES.

The protein resides in the cytoplasm. It catalyses the reaction ATP + H2O + a folded polypeptide = ADP + phosphate + an unfolded polypeptide.. Together with its co-chaperonin GroES, plays an essential role in assisting protein folding. The GroEL-GroES system forms a nano-cage that allows encapsulation of the non-native substrate proteins and provides a physical environment optimized to promote and accelerate protein folding. The polypeptide is Chaperonin GroEL (Leptospira biflexa serovar Patoc (strain Patoc 1 / Ames)).